A 343-amino-acid polypeptide reads, in one-letter code: tRNA N6-adenosine threonylcarbamoyltransferase (343 aa).

Positions 120 and 124 each coordinate Fe cation. Residues 142–146 (VVSGG), Asp-175, Gly-188, Asp-192, and Asn-281 each bind substrate. Asp-309 is a binding site for Fe cation.

Belongs to the KAE1 / TsaD family. Fe(2+) is required as a cofactor.

It localises to the cytoplasm. The enzyme catalyses L-threonylcarbamoyladenylate + adenosine(37) in tRNA = N(6)-L-threonylcarbamoyladenosine(37) in tRNA + AMP + H(+). Functionally, required for the formation of a threonylcarbamoyl group on adenosine at position 37 (t(6)A37) in tRNAs that read codons beginning with adenine. Is involved in the transfer of the threonylcarbamoyl moiety of threonylcarbamoyl-AMP (TC-AMP) to the N6 group of A37, together with TsaE and TsaB. TsaD likely plays a direct catalytic role in this reaction. The chain is tRNA N6-adenosine threonylcarbamoyltransferase from Halalkalibacterium halodurans (strain ATCC BAA-125 / DSM 18197 / FERM 7344 / JCM 9153 / C-125) (Bacillus halodurans).